The following is a 507-amino-acid chain: Histidine ammonia-lyase (507 aa).

The 5-imidazolinone (Ala-Gly) cross-link spans 142 to 144 (ASG). Residue Ser-143 is modified to 2,3-didehydroalanine (Ser).

The protein belongs to the PAL/histidase family. In terms of processing, contains an active site 4-methylidene-imidazol-5-one (MIO), which is formed autocatalytically by cyclization and dehydration of residues Ala-Ser-Gly.

Its subcellular location is the cytoplasm. The enzyme catalyses L-histidine = trans-urocanate + NH4(+). It participates in amino-acid degradation; L-histidine degradation into L-glutamate; N-formimidoyl-L-glutamate from L-histidine: step 1/3. The sequence is that of Histidine ammonia-lyase from Symbiobacterium thermophilum (strain DSM 24528 / JCM 14929 / IAM 14863 / T).